Reading from the N-terminus, the 202-residue chain is Matrix protein (202 aa).

A disordered region spans residues 13–32; sequence DEEIPKPGTPSAPPDDDDLW. The short motif at 35-38 is the PPXY motif element; it reads PPEY.

Belongs to the lyssavirus matrix protein family. In terms of assembly, homomultimer. Interacts with nucleoprotein and with the cytoplasmic domain of glycoprotein.

It is found in the virion membrane. It localises to the host endomembrane system. In terms of biological role, plays a major role in assembly and budding of virion. Completely covers the ribonucleoprotein coil and keep it in condensed bullet-shaped form. Inhibits viral transcription and stimulates replication. Plays a major role in early induction of TRAIL-mediated apoptosis in infected neurons. The polypeptide is Matrix protein (M) (Lagos bat virus (LBV)).